A 465-amino-acid polypeptide reads, in one-letter code: Methylenetetrahydrofolate--tRNA-(uracil-5-)-methyltransferase TrmFO (465 aa).

FAD is bound at residue 3–8; it reads GAGLAG.

Belongs to the MnmG family. TrmFO subfamily. FAD is required as a cofactor.

It is found in the cytoplasm. The catalysed reaction is uridine(54) in tRNA + (6R)-5,10-methylene-5,6,7,8-tetrahydrofolate + NADH + H(+) = 5-methyluridine(54) in tRNA + (6S)-5,6,7,8-tetrahydrofolate + NAD(+). The enzyme catalyses uridine(54) in tRNA + (6R)-5,10-methylene-5,6,7,8-tetrahydrofolate + NADPH + H(+) = 5-methyluridine(54) in tRNA + (6S)-5,6,7,8-tetrahydrofolate + NADP(+). Functionally, catalyzes the folate-dependent formation of 5-methyl-uridine at position 54 (M-5-U54) in all tRNAs. The polypeptide is Methylenetetrahydrofolate--tRNA-(uracil-5-)-methyltransferase TrmFO (Bradyrhizobium sp. (strain ORS 278)).